The chain runs to 377 residues: Tyrosine-protein phosphatase 2 (377 aa).

Residues 27 to 347 (IDKEFNFILQ…RFCYLAISEA (321 aa)) enclose the Tyrosine-protein phosphatase domain. The interval 77-137 (IDDDDDDEDD…EDHGGSGDEG (61 aa)) is disordered. Positions 78 to 91 (DDDDDDEDDNEDDI) are enriched in acidic residues. The segment covering 92–102 (IVSNNNNNNNN) has biased composition (low complexity). A compositionally biased stretch (polar residues) spans 113-123 (GSSGQSDVMSN). Cys-281 (phosphocysteine intermediate) is an active-site residue.

This sequence belongs to the protein-tyrosine phosphatase family. Non-receptor class subfamily.

The enzyme catalyses O-phospho-L-tyrosyl-[protein] + H2O = L-tyrosyl-[protein] + phosphate. The polypeptide is Tyrosine-protein phosphatase 2 (ptpB) (Dictyostelium discoideum (Social amoeba)).